Here is a 174-residue protein sequence, read N- to C-terminus: Large ribosomal subunit protein uL13 (174 aa).

Disordered stretches follow at residues 1 to 22 (MAFPDTDVSPPRGGPSSPAKSP) and 153 to 174 (GETHPHSAQKPQVLKTQPLEVK).

This sequence belongs to the universal ribosomal protein uL13 family. In terms of assembly, part of the 50S ribosomal subunit. Contacts proteins L3 and L20.

This protein is one of the early assembly proteins of the 50S ribosomal subunit. Binds to the 23S rRNA. The sequence is that of Large ribosomal subunit protein uL13 (rplM) from Deinococcus radiodurans (strain ATCC 13939 / DSM 20539 / JCM 16871 / CCUG 27074 / LMG 4051 / NBRC 15346 / NCIMB 9279 / VKM B-1422 / R1).